Here is a 449-residue protein sequence, read N- to C-terminus: Exodeoxyribonuclease 7 large subunit (449 aa).

Belongs to the XseA family. Heterooligomer composed of large and small subunits.

The protein resides in the cytoplasm. It carries out the reaction Exonucleolytic cleavage in either 5'- to 3'- or 3'- to 5'-direction to yield nucleoside 5'-phosphates.. Functionally, bidirectionally degrades single-stranded DNA into large acid-insoluble oligonucleotides, which are then degraded further into small acid-soluble oligonucleotides. The protein is Exodeoxyribonuclease 7 large subunit of Aliivibrio fischeri (strain ATCC 700601 / ES114) (Vibrio fischeri).